The following is a 642-amino-acid chain: Threonine--tRNA ligase (642 aa).

One can recognise a TGS domain in the interval 1–61 (MPVITLPDGS…ETDAELSIIT (61 aa)). The tract at residues 243–534 (DHRKIGKQLD…LIEEYAGRFP (292 aa)) is catalytic. Positions 334, 385, and 511 each coordinate Zn(2+).

Belongs to the class-II aminoacyl-tRNA synthetase family. Homodimer. Zn(2+) is required as a cofactor.

It is found in the cytoplasm. It carries out the reaction tRNA(Thr) + L-threonine + ATP = L-threonyl-tRNA(Thr) + AMP + diphosphate + H(+). Its function is as follows. Catalyzes the attachment of threonine to tRNA(Thr) in a two-step reaction: L-threonine is first activated by ATP to form Thr-AMP and then transferred to the acceptor end of tRNA(Thr). Also edits incorrectly charged L-seryl-tRNA(Thr). The protein is Threonine--tRNA ligase of Shewanella baltica (strain OS195).